A 173-amino-acid chain; its full sequence is ATP synthase subunit delta (173 aa).

Belongs to the ATPase delta chain family. In terms of assembly, F-type ATPases have 2 components, F(1) - the catalytic core - and F(0) - the membrane proton channel. F(1) has five subunits: alpha(3), beta(3), gamma(1), delta(1), epsilon(1). F(0) has three main subunits: a(1), b(2) and c(10-14). The alpha and beta chains form an alternating ring which encloses part of the gamma chain. F(1) is attached to F(0) by a central stalk formed by the gamma and epsilon chains, while a peripheral stalk is formed by the delta and b chains.

It localises to the cell inner membrane. F(1)F(0) ATP synthase produces ATP from ADP in the presence of a proton or sodium gradient. F-type ATPases consist of two structural domains, F(1) containing the extramembraneous catalytic core and F(0) containing the membrane proton channel, linked together by a central stalk and a peripheral stalk. During catalysis, ATP synthesis in the catalytic domain of F(1) is coupled via a rotary mechanism of the central stalk subunits to proton translocation. Its function is as follows. This protein is part of the stalk that links CF(0) to CF(1). It either transmits conformational changes from CF(0) to CF(1) or is implicated in proton conduction. The chain is ATP synthase subunit delta from Campylobacter jejuni subsp. jejuni serotype O:2 (strain ATCC 700819 / NCTC 11168).